The chain runs to 547 residues: uncharacterized protein (547 aa).

Residues 38–50 (RNLPFHREREKVE) show a composition bias toward basic and acidic residues. The disordered stretch occupies residues 38–89 (RNLPFHREREKVESNPNSSDEEDLTSTNNTRSSDNTTSDTEDDSGEDSYQVE). A compositionally biased stretch (low complexity) spans 62 to 75 (TSTNNTRSSDNTTS). Helical transmembrane passes span 108–128 (IYTL…SSIF), 148–168 (LCSA…APLS), 174–194 (LPLY…GGCS), 197–217 (IWSL…PMSA), 233–253 (GALL…PVMG), 265–285 (WDFW…CFTM), 346–366 (MYLV…PLIF), 377–397 (GLAI…TPII), 418–438 (LFPL…LGWT), 445–465 (WAAP…VLAV), 478–500 (AASA…TIVA), and 514–534 (SLLA…FFWG).

It belongs to the major facilitator superfamily. CAR1 family.

It is found in the membrane. This is an uncharacterized protein from Schizosaccharomyces pombe (strain 972 / ATCC 24843) (Fission yeast).